We begin with the raw amino-acid sequence, 930 residues long: MSKVRLYEIAKELGKESKEVVARAKELGLDVKSHSSSVEADAGERIKSSFTKAAAPQAPAEKPVAAQPSPQKTPAKEAAPVKAEPTEAKAAAQPEAKTETAAPVKRPQSRNFKAEREARAKEEAERRKQQGNRKPQNKEQGKREDRDNRNKNRGNSNDRDRGNRPNDRRDNRGQDGRRNGQNHQGFNGQKRQQPQGPKIDFKARAAALKAEQNAEYARSSEERFKQAQEAKEVMERQNRRKEQPKAEAPAPVQPAPAPSAPAANPSPAPAAVDTRRKKQARPDKKRDDFDREEEGPRKQQKNRSSQNQVRNQRNSNWNKNKKNKKGKGNNNQAPKPVTERKFHELPTEFEYTDGMTVAEIAKRIKREPAEIVKKLFMMGVMATQNQSLDGDTIELLMVDYGIEAKKKVEVDTADIERFFVEEGYINQDALVERPPVVTIMGHVDHGKTTLLDTLRNSRVATGEAGGITQHIGAYQIEESGKKITFLDTPGHAAFTSMRARGASVTDITILVVAADDGVMPQTIEAINHSKAADVPIIVAINKIDKPGANPERVIGELAEHGVMSTAWGGDSEFVEISAKFNQNIDSLLETVLLVAEIQELKADPTVRAIGTVIEARLDKGKGAVATLLVQQGTLNVQDPIVVGNTFGRVRAMTNDLGRRVKVAGPSTPVSITGLNETPMAGDHFAVYEDEKAARAAGEERAKRALLKQRQATHRVSLENLFDTLKAGEVKSVNVIIKADVQGSVEALSASLQKIEVEGVKITIVHSAVGAINESDVTLAEASNAFIIGFNVRPTSQARQQAEADDVEIRLHSIIYKVIEEMEDAMKGMLDPEYEEKIIGEALIRETFKVSKVGTIGGFMVINGKVTRDSKVRVIRDGVVIYDGELASLKHFKDDVKEVTNGREGGLMIDGYNDIQVDDTIEAYIMEEIKK.

Residues 27–342 form a disordered region; it reads LGLDVKSHSS…APKPVTERKF (316 aa). The segment covering 52–103 has biased composition (low complexity); the sequence is KAAAPQAPAEKPVAAQPSPQKTPAKEAAPVKAEPTEAKAAAQPEAKTETAAP. Composition is skewed to basic and acidic residues over residues 112–128 and 136–178; these read FKAE…ERRK and QNKE…DGRR. Over residues 183–195 the composition is skewed to polar residues; the sequence is HQGFNGQKRQQPQ. Over residues 218 to 245 the composition is skewed to basic and acidic residues; it reads RSSEERFKQAQEAKEVMERQNRRKEQPK. Positions 251–268 are enriched in pro residues; it reads PVQPAPAPSAPAANPSPA. The segment covering 280–297 has biased composition (basic and acidic residues); the sequence is ARPDKKRDDFDREEEGPR. Low complexity predominate over residues 302–318; the sequence is NRSSQNQVRNQRNSNWN. In terms of domain architecture, tr-type G spans 432–599; that stretch reads ERPPVVTIMG…TVLLVAEIQE (168 aa). The interval 441-448 is G1; it reads GHVDHGKT. 441 to 448 contributes to the GTP binding site; sequence GHVDHGKT. Positions 466 to 470 are G2; the sequence is GITQH. A G3 region spans residues 487–490; sequence DTPG. Residues 487-491 and 541-544 each bind GTP; these read DTPGH and NKID. Residues 541–544 are G4; the sequence is NKID. A G5 region spans residues 577 to 579; that stretch reads SAK.

It belongs to the TRAFAC class translation factor GTPase superfamily. Classic translation factor GTPase family. IF-2 subfamily.

The protein localises to the cytoplasm. One of the essential components for the initiation of protein synthesis. Protects formylmethionyl-tRNA from spontaneous hydrolysis and promotes its binding to the 30S ribosomal subunits. Also involved in the hydrolysis of GTP during the formation of the 70S ribosomal complex. In Streptococcus sanguinis (strain SK36), this protein is Translation initiation factor IF-2.